Reading from the N-terminus, the 775-residue chain is Transcription activator of gluconeogenesis HCBG_00867 (775 aa).

The disordered stretch occupies residues 1-70 (MTASTQNGSP…NAKDPLRPRR (70 aa)). 2 stretches are compositionally biased toward polar residues: residues 21-41 (NQESKNMTANPADASESQSPA) and 48-60 (TAESGQKHTSTAA). The segment at residues 77–105 (CFACQRAHLTCGDERPCQRCIKRGLQDAC) is a DNA-binding region (zn(2)-C6 fungal-type). Disordered stretches follow at residues 179–248 (TQAK…PFGA), 286–351 (GAGD…NIYN), 556–592 (NLNVNTGGSSPRGSGTFTPRNGNGVDPHSGMSAAGGG), and 649–725 (QGKE…SPKQ). Positions 195-217 (MQDTSINPSAFQAPSPTSTPNFD) are enriched in polar residues. Residues 218 to 229 (LSSNPPNRNLSS) show a composition bias toward low complexity. Polar residues-rich tracts occupy residues 230 to 244 (AMTQTPSSASNQTQD), 292 to 323 (PSDSATQRGSIGRSSGTFTAQNFGDSTNTQSP), 334 to 351 (WNPSGQSQTNPRNNNIYN), and 557 to 576 (LNVNTGGSSPRGSGTFTPRN). Residues 657-668 (GSDGKGGGGGGD) show a composition bias toward gly residues. Low complexity predominate over residues 669 to 713 (VAATAATTSTSTSNGANSSGHANANRNNTNPKNSSPPSSSSAAAA).

It belongs to the ERT1/acuK family.

It is found in the nucleus. Transcription factor which regulates nonfermentable carbon utilization. Activator of gluconeogenetic genes. This chain is Transcription activator of gluconeogenesis HCBG_00867, found in Ajellomyces capsulatus (strain G186AR / H82 / ATCC MYA-2454 / RMSCC 2432) (Darling's disease fungus).